A 66-amino-acid chain; its full sequence is Large ribosomal subunit protein uL29 (66 aa).

The protein belongs to the universal ribosomal protein uL29 family.

This chain is Large ribosomal subunit protein uL29, found in Pseudothermotoga lettingae (strain ATCC BAA-301 / DSM 14385 / NBRC 107922 / TMO) (Thermotoga lettingae).